A 173-amino-acid chain; its full sequence is Photosystem I assembly protein Ycf3 (173 aa).

TPR repeat units lie at residues 35-68 (AYIY…EENK), 72-105 (GETL…NPKQ), and 120-153 (GRFA…YPGG).

It belongs to the Ycf3 family.

It localises to the cellular thylakoid membrane. Functionally, essential for the assembly of the photosystem I (PSI) complex. May act as a chaperone-like factor to guide the assembly of the PSI subunits. This chain is Photosystem I assembly protein Ycf3, found in Prochlorococcus marinus subsp. pastoris (strain CCMP1986 / NIES-2087 / MED4).